The chain runs to 263 residues: 4-hydroxy-tetrahydrodipicolinate reductase (263 aa).

NAD(+)-binding positions include 8-13 (GACGRM), Asp34, 99-101 (GTT), and 125-128 (SPNY). The active-site Proton donor/acceptor is the His157. His158 provides a ligand contact to (S)-2,3,4,5-tetrahydrodipicolinate. The Proton donor role is filled by Lys161. 167–168 (GT) is a (S)-2,3,4,5-tetrahydrodipicolinate binding site.

This sequence belongs to the DapB family.

It localises to the cytoplasm. It carries out the reaction (S)-2,3,4,5-tetrahydrodipicolinate + NAD(+) + H2O = (2S,4S)-4-hydroxy-2,3,4,5-tetrahydrodipicolinate + NADH + H(+). The enzyme catalyses (S)-2,3,4,5-tetrahydrodipicolinate + NADP(+) + H2O = (2S,4S)-4-hydroxy-2,3,4,5-tetrahydrodipicolinate + NADPH + H(+). The protein operates within amino-acid biosynthesis; L-lysine biosynthesis via DAP pathway; (S)-tetrahydrodipicolinate from L-aspartate: step 4/4. In terms of biological role, catalyzes the conversion of 4-hydroxy-tetrahydrodipicolinate (HTPA) to tetrahydrodipicolinate. The chain is 4-hydroxy-tetrahydrodipicolinate reductase from Methanosarcina acetivorans (strain ATCC 35395 / DSM 2834 / JCM 12185 / C2A).